The following is a 318-amino-acid chain: Methionyl-tRNA formyltransferase (318 aa).

110–113 (SLLP) contributes to the (6S)-5,6,7,8-tetrahydrofolate binding site.

The protein belongs to the Fmt family.

It carries out the reaction L-methionyl-tRNA(fMet) + (6R)-10-formyltetrahydrofolate = N-formyl-L-methionyl-tRNA(fMet) + (6S)-5,6,7,8-tetrahydrofolate + H(+). Attaches a formyl group to the free amino group of methionyl-tRNA(fMet). The formyl group appears to play a dual role in the initiator identity of N-formylmethionyl-tRNA by promoting its recognition by IF2 and preventing the misappropriation of this tRNA by the elongation apparatus. This is Methionyl-tRNA formyltransferase from Ligilactobacillus salivarius (strain UCC118) (Lactobacillus salivarius).